The primary structure comprises 323 residues: Fructose-1,6-bisphosphatase class 1 (323 aa).

Mg(2+) contacts are provided by glutamate 88, aspartate 107, leucine 109, and aspartate 110. Substrate contacts are provided by residues 110-113 and asparagine 200; that span reads DGSS. Glutamate 272 is a binding site for Mg(2+).

It belongs to the FBPase class 1 family. Homotetramer. Mg(2+) is required as a cofactor.

It is found in the cytoplasm. It carries out the reaction beta-D-fructose 1,6-bisphosphate + H2O = beta-D-fructose 6-phosphate + phosphate. The protein operates within carbohydrate biosynthesis; gluconeogenesis. This Acinetobacter baumannii (strain ACICU) protein is Fructose-1,6-bisphosphatase class 1.